The sequence spans 228 residues: Protein K8.1 (228 aa).

The N-terminal stretch at 1-26 (MSSTQIRTEIPVALLILCLCLVACHA) is a signal peptide. N-linked (GlcNAc...) asparagine; by host glycosylation is found at Asn55, Asn60, Asn70, and Asn85. The disordered stretch occupies residues 77-113 (GSPSSEYPNVSVSVEDTSASGSGEDAIDESGSGEEER). Over residues 78–97 (SPSSEYPNVSVSVEDTSASG) the composition is skewed to polar residues. The chain crosses the membrane as a helical span at residues 197 to 217 (LYILWAVGLLLGLVLILYLCV).

The protein localises to the host membrane. In Human herpesvirus 8 type P (isolate GK18) (HHV-8), this protein is Protein K8.1 (K8.1).